Consider the following 417-residue polypeptide: RH-like protein IIR (417 aa).

A run of 11 helical transmembrane segments spans residues 12–32 (CLPL…YFFT), 44–64 (LVAS…GFGF), 77–97 (VAFS…LDGF), 125–145 (ISVD…MVLV), 172–192 (IYVF…KPLP), 203–223 (TIPS…WPSF), 238–258 (VFNT…GSSL), 265–285 (ISMS…GTSC), 287–307 (LIPS…ISVG), 331–351 (NFSW…VRHT), and 358–378 (MIGF…TIAL).

It belongs to the ammonium transporter (TC 2.A.49) family. Rh subfamily.

It localises to the membrane. Its function is as follows. May be part of an oligomeric complex which is likely to have a transport or channel function in the erythrocyte membrane. This is RH-like protein IIR from Pan troglodytes (Chimpanzee).